The chain runs to 555 residues: Potassium-transporting ATPase potassium-binding subunit (555 aa).

A run of 10 helical transmembrane segments spans residues 2–22 (IWVAVVITMLLFILVAKPTGI), 60–80 (QYALSLVLLNGFMIVVVYFIF), 130–150 (IGITFLMFAAPATTLALVMAF), 173–193 (VFLPIAFMAALVFVALGVPQT), 246–266 (MSNILQMMLMMLLPTALPFTY), 278–298 (ILFVSLFMVFLLGFITITTSE), 374–394 (AGFVNIIMYAIIAVFISGLMV), 412–432 (LIAVTILFHPLLILGFSALAL), 483–503 (LVMFLGRYFSLITMLAVAASL), and 525–545 (GIFIGTIVIVGALTFFPMLVL).

It belongs to the KdpA family. The system is composed of three essential subunits: KdpA, KdpB and KdpC.

Its subcellular location is the cell membrane. In terms of biological role, part of the high-affinity ATP-driven potassium transport (or Kdp) system, which catalyzes the hydrolysis of ATP coupled with the electrogenic transport of potassium into the cytoplasm. This subunit binds the extracellular potassium ions and delivers the ions to the membrane domain of KdpB through an intramembrane tunnel. The sequence is that of Potassium-transporting ATPase potassium-binding subunit from Bacillus anthracis (strain A0248).